The following is a 234-amino-acid chain: Phosphoribosylformylglycinamidine synthase subunit PurQ (234 aa).

The Glutamine amidotransferase type-1 domain maps to 4–234 (RIGVVTFPGS…TSILKKLVNA (231 aa)). Cys87 serves as the catalytic Nucleophile. Catalysis depends on residues His204 and Glu206.

As to quaternary structure, part of the FGAM synthase complex composed of 1 PurL, 1 PurQ and 2 PurS subunits.

It localises to the cytoplasm. It catalyses the reaction N(2)-formyl-N(1)-(5-phospho-beta-D-ribosyl)glycinamide + L-glutamine + ATP + H2O = 2-formamido-N(1)-(5-O-phospho-beta-D-ribosyl)acetamidine + L-glutamate + ADP + phosphate + H(+). The enzyme catalyses L-glutamine + H2O = L-glutamate + NH4(+). Its pathway is purine metabolism; IMP biosynthesis via de novo pathway; 5-amino-1-(5-phospho-D-ribosyl)imidazole from N(2)-formyl-N(1)-(5-phospho-D-ribosyl)glycinamide: step 1/2. In terms of biological role, part of the phosphoribosylformylglycinamidine synthase complex involved in the purines biosynthetic pathway. Catalyzes the ATP-dependent conversion of formylglycinamide ribonucleotide (FGAR) and glutamine to yield formylglycinamidine ribonucleotide (FGAM) and glutamate. The FGAM synthase complex is composed of three subunits. PurQ produces an ammonia molecule by converting glutamine to glutamate. PurL transfers the ammonia molecule to FGAR to form FGAM in an ATP-dependent manner. PurS interacts with PurQ and PurL and is thought to assist in the transfer of the ammonia molecule from PurQ to PurL. The sequence is that of Phosphoribosylformylglycinamidine synthase subunit PurQ from Streptomyces avermitilis (strain ATCC 31267 / DSM 46492 / JCM 5070 / NBRC 14893 / NCIMB 12804 / NRRL 8165 / MA-4680).